The following is a 467-amino-acid chain: ATP-dependent protease ATPase subunit HslU (467 aa).

ATP is bound by residues V22 and 64 to 69 (GVGKTE). Positions 166 to 185 (GQNQDEEEEPPTEEIKTKRS) are disordered. ATP is bound by residues D280, E345, and R417.

This sequence belongs to the ClpX chaperone family. HslU subfamily. As to quaternary structure, a double ring-shaped homohexamer of HslV is capped on each side by a ring-shaped HslU homohexamer. The assembly of the HslU/HslV complex is dependent on binding of ATP.

Its subcellular location is the cytoplasm. ATPase subunit of a proteasome-like degradation complex; this subunit has chaperone activity. The binding of ATP and its subsequent hydrolysis by HslU are essential for unfolding of protein substrates subsequently hydrolyzed by HslV. HslU recognizes the N-terminal part of its protein substrates and unfolds these before they are guided to HslV for hydrolysis. The chain is ATP-dependent protease ATPase subunit HslU from Staphylococcus epidermidis (strain ATCC 35984 / DSM 28319 / BCRC 17069 / CCUG 31568 / BM 3577 / RP62A).